The chain runs to 338 residues: tRNA N6-adenosine threonylcarbamoyltransferase (338 aa).

H111 and H115 together coordinate Fe cation. Substrate is bound by residues 134–138, D167, G180, and N275; that span reads LLSGG. Residue D304 participates in Fe cation binding.

It belongs to the KAE1 / TsaD family. Requires Fe(2+) as cofactor.

The protein localises to the cytoplasm. It carries out the reaction L-threonylcarbamoyladenylate + adenosine(37) in tRNA = N(6)-L-threonylcarbamoyladenosine(37) in tRNA + AMP + H(+). Required for the formation of a threonylcarbamoyl group on adenosine at position 37 (t(6)A37) in tRNAs that read codons beginning with adenine. Is involved in the transfer of the threonylcarbamoyl moiety of threonylcarbamoyl-AMP (TC-AMP) to the N6 group of A37, together with TsaE and TsaB. TsaD likely plays a direct catalytic role in this reaction. This is tRNA N6-adenosine threonylcarbamoyltransferase from Leptospira borgpetersenii serovar Hardjo-bovis (strain JB197).